Consider the following 419-residue polypeptide: Putative competence-damage inducible protein (419 aa).

This sequence belongs to the CinA family.

The polypeptide is Putative competence-damage inducible protein (Lysinibacillus sphaericus (strain C3-41)).